A 278-amino-acid chain; its full sequence is MQPITTEIVSRTIIKRPADSHKGNYGRIMLIGGNQNFGGAIIMAATAATYSGAGLVTVATDPSNFTSLHARLPEAMVIDYHQTDTLLNLLAGMDVIVIGPGLGTDTVADQLLTAVLAATHVPQRLVIDGSALTLLAQQARPLPATDIVVTPHQMEWQRLSGIAIKDQTPTANHDAQQRLGVMAVVKAHRTTVYTDERVWFNPGGTPAMATGGMGDTLAGMIGGFVSQFHNFTDAVLSAVYLHSAIADDLAATRYVVLPHQISTRIPTYMHRFSQIERP.

The YjeF C-terminal domain maps to 5 to 272 (TTEIVSRTII…TRIPTYMHRF (268 aa)). (6S)-NADPHX contacts are provided by Ala-40, Gly-103, and His-152. AMP is bound at residue Gly-214. Asp-215 is a binding site for (6S)-NADPHX.

Belongs to the NnrD/CARKD family. Homotetramer. Mg(2+) is required as a cofactor.

It catalyses the reaction (6S)-NADHX + ADP = AMP + phosphate + NADH + H(+). The enzyme catalyses (6S)-NADPHX + ADP = AMP + phosphate + NADPH + H(+). In terms of biological role, catalyzes the dehydration of the S-form of NAD(P)HX at the expense of ADP, which is converted to AMP. Together with NAD(P)HX epimerase, which catalyzes the epimerization of the S- and R-forms, the enzyme allows the repair of both epimers of NAD(P)HX, a damaged form of NAD(P)H that is a result of enzymatic or heat-dependent hydration. In Lactiplantibacillus plantarum (strain ATCC BAA-793 / NCIMB 8826 / WCFS1) (Lactobacillus plantarum), this protein is ADP-dependent (S)-NAD(P)H-hydrate dehydratase.